The sequence spans 319 residues: tRNA uridine(34) hydroxylase (319 aa).

The region spanning 127 to 221 (KQEDTVIIDA…YGKDPEVQGE (95 aa)) is the Rhodanese domain. Cys181 serves as the catalytic Cysteine persulfide intermediate.

It belongs to the TrhO family.

It catalyses the reaction uridine(34) in tRNA + AH2 + O2 = 5-hydroxyuridine(34) in tRNA + A + H2O. Catalyzes oxygen-dependent 5-hydroxyuridine (ho5U) modification at position 34 in tRNAs. This chain is tRNA uridine(34) hydroxylase, found in Bacillus anthracis (strain A0248).